Here is a 482-residue protein sequence, read N- to C-terminus: UDP-N-acetylmuramate--L-alanine ligase (482 aa).

ATP is bound at residue 123-129 (GTHGKTT).

It belongs to the MurCDEF family.

Its subcellular location is the cytoplasm. The enzyme catalyses UDP-N-acetyl-alpha-D-muramate + L-alanine + ATP = UDP-N-acetyl-alpha-D-muramoyl-L-alanine + ADP + phosphate + H(+). The protein operates within cell wall biogenesis; peptidoglycan biosynthesis. Its function is as follows. Cell wall formation. This Pseudomonas entomophila (strain L48) protein is UDP-N-acetylmuramate--L-alanine ligase.